Consider the following 360-residue polypeptide: S-adenosylmethionine:tRNA ribosyltransferase-isomerase (360 aa).

The protein belongs to the QueA family. Monomer.

The protein localises to the cytoplasm. The catalysed reaction is 7-aminomethyl-7-carbaguanosine(34) in tRNA + S-adenosyl-L-methionine = epoxyqueuosine(34) in tRNA + adenine + L-methionine + 2 H(+). It functions in the pathway tRNA modification; tRNA-queuosine biosynthesis. Transfers and isomerizes the ribose moiety from AdoMet to the 7-aminomethyl group of 7-deazaguanine (preQ1-tRNA) to give epoxyqueuosine (oQ-tRNA). The chain is S-adenosylmethionine:tRNA ribosyltransferase-isomerase from Rhodopseudomonas palustris (strain ATCC BAA-98 / CGA009).